A 139-amino-acid polypeptide reads, in one-letter code: uncharacterized protein (139 aa).

The HTH cro/C1-type domain maps to 8–63; the sequence is LRELRRARKLTVNQLAVYSGISSATISKIENGKRGTPKPATIKKLAAVLKVPYENL. Residues 19–38 constitute a DNA-binding region (H-T-H motif); that stretch reads VNQLAVYSGISSATISKIEN.

This is an uncharacterized protein from Bacillus subtilis (strain 168).